Here is a 135-residue protein sequence, read N- to C-terminus: Integration host factor subunit beta (135 aa).

A compositionally biased stretch (basic and acidic residues) spans 83–92 (GKELRERVDR). A disordered region spans residues 83 to 135 (GKELRERVDRTVTQGGGMNGNGHAPHGKTGQSQLGSQSPASLHDDGQLNLVRS). Residues 111-122 (TGQSQLGSQSPA) show a composition bias toward polar residues.

This sequence belongs to the bacterial histone-like protein family. Heterodimer of an alpha and a beta chain.

Functionally, this protein is one of the two subunits of integration host factor, a specific DNA-binding protein that functions in genetic recombination as well as in transcriptional and translational control. This chain is Integration host factor subunit beta, found in Cupriavidus metallidurans (strain ATCC 43123 / DSM 2839 / NBRC 102507 / CH34) (Ralstonia metallidurans).